The following is a 143-amino-acid chain: SsrA-binding protein (143 aa).

This sequence belongs to the SmpB family.

It localises to the cytoplasm. Required for rescue of stalled ribosomes mediated by trans-translation. Binds to transfer-messenger RNA (tmRNA), required for stable association of tmRNA with ribosomes. tmRNA and SmpB together mimic tRNA shape, replacing the anticodon stem-loop with SmpB. tmRNA is encoded by the ssrA gene; the 2 termini fold to resemble tRNA(Ala) and it encodes a 'tag peptide', a short internal open reading frame. During trans-translation Ala-aminoacylated tmRNA acts like a tRNA, entering the A-site of stalled ribosomes, displacing the stalled mRNA. The ribosome then switches to translate the ORF on the tmRNA; the nascent peptide is terminated with the 'tag peptide' encoded by the tmRNA and targeted for degradation. The ribosome is freed to recommence translation, which seems to be the essential function of trans-translation. The polypeptide is SsrA-binding protein (Deinococcus geothermalis (strain DSM 11300 / CIP 105573 / AG-3a)).